Consider the following 199-residue polypeptide: Alkyl hydroperoxide reductase C (199 aa).

One can recognise a Thioredoxin domain in the interval 2 to 163; it reads VLVTYPAPDF…TLRMIDALHF (162 aa). Cys50 acts as the Cysteine sulfenic acid (-SOH) intermediate in catalysis.

Belongs to the peroxiredoxin family. AhpC/Prx1 subfamily. As to quaternary structure, homodimer; disulfide-linked, upon oxidation. 5 homodimers assemble to form a ring-like decamer.

Its subcellular location is the cytoplasm. It carries out the reaction a hydroperoxide + NADH + H(+) = an alcohol + NAD(+) + H2O. Its function is as follows. Thiol-specific peroxidase that catalyzes the reduction of hydrogen peroxide and organic hydroperoxides to water and alcohols, respectively. Plays a role in cell protection against oxidative stress by detoxifying peroxides. The protein is Alkyl hydroperoxide reductase C of Buchnera aphidicola subsp. Baizongia pistaciae (strain Bp).